The chain runs to 291 residues: ATP phosphoribosyltransferase 1 (291 aa).

The protein belongs to the ATP phosphoribosyltransferase family. Long subfamily. Requires Mg(2+) as cofactor.

The protein localises to the cytoplasm. It carries out the reaction 1-(5-phospho-beta-D-ribosyl)-ATP + diphosphate = 5-phospho-alpha-D-ribose 1-diphosphate + ATP. Its pathway is amino-acid biosynthesis; L-histidine biosynthesis; L-histidine from 5-phospho-alpha-D-ribose 1-diphosphate: step 1/9. Its activity is regulated as follows. Feedback inhibited by histidine. Its function is as follows. Catalyzes the condensation of ATP and 5-phosphoribose 1-diphosphate to form N'-(5'-phosphoribosyl)-ATP (PR-ATP). Has a crucial role in the pathway because the rate of histidine biosynthesis seems to be controlled primarily by regulation of HisG enzymatic activity. This chain is ATP phosphoribosyltransferase 1, found in Geobacter sulfurreducens (strain ATCC 51573 / DSM 12127 / PCA).